We begin with the raw amino-acid sequence, 156 residues long: SsrA-binding protein (156 aa).

Positions 135–150 (KRDTIKDREWQRDRSR) are enriched in basic and acidic residues. The segment at 135 to 156 (KRDTIKDREWQRDRSRIMKKNT) is disordered.

It belongs to the SmpB family.

It localises to the cytoplasm. Required for rescue of stalled ribosomes mediated by trans-translation. Binds to transfer-messenger RNA (tmRNA), required for stable association of tmRNA with ribosomes. tmRNA and SmpB together mimic tRNA shape, replacing the anticodon stem-loop with SmpB. tmRNA is encoded by the ssrA gene; the 2 termini fold to resemble tRNA(Ala) and it encodes a 'tag peptide', a short internal open reading frame. During trans-translation Ala-aminoacylated tmRNA acts like a tRNA, entering the A-site of stalled ribosomes, displacing the stalled mRNA. The ribosome then switches to translate the ORF on the tmRNA; the nascent peptide is terminated with the 'tag peptide' encoded by the tmRNA and targeted for degradation. The ribosome is freed to recommence translation, which seems to be the essential function of trans-translation. The sequence is that of SsrA-binding protein from Legionella pneumophila (strain Corby).